The sequence spans 450 residues: tRNA-2-methylthio-N(6)-dimethylallyladenosine synthase (450 aa).

The MTTase N-terminal domain occupies 8 to 124; it reads RTLHITTWGC…LPELIAEIEA (117 aa). [4Fe-4S] cluster is bound by residues Cys17, Cys52, Cys87, Cys162, Cys166, and Cys169. In terms of domain architecture, Radical SAM core spans 148–380; the sequence is ASQGPIAFLA…QAVLRDQQHA (233 aa). Residues 383–445 form the TRAM domain; that stretch reads RAQVGRSFEV…PNSLMASLTQ (63 aa).

It belongs to the methylthiotransferase family. MiaB subfamily. As to quaternary structure, monomer. Requires [4Fe-4S] cluster as cofactor.

Its subcellular location is the cytoplasm. The enzyme catalyses N(6)-dimethylallyladenosine(37) in tRNA + (sulfur carrier)-SH + AH2 + 2 S-adenosyl-L-methionine = 2-methylsulfanyl-N(6)-dimethylallyladenosine(37) in tRNA + (sulfur carrier)-H + 5'-deoxyadenosine + L-methionine + A + S-adenosyl-L-homocysteine + 2 H(+). In terms of biological role, catalyzes the methylthiolation of N6-(dimethylallyl)adenosine (i(6)A), leading to the formation of 2-methylthio-N6-(dimethylallyl)adenosine (ms(2)i(6)A) at position 37 in tRNAs that read codons beginning with uridine. The sequence is that of tRNA-2-methylthio-N(6)-dimethylallyladenosine synthase from Acidiphilium cryptum (strain JF-5).